The primary structure comprises 115 residues: Replication initiation control protein YabA (115 aa).

Zn(2+) is bound by residues histidine 90, cysteine 92, cysteine 106, and cysteine 109.

Belongs to the YabA family. In terms of assembly, homotetramer. Interacts with both DnaA and DnaN, acting as a bridge between these two proteins. Zn(2+) is required as a cofactor.

The protein resides in the cytoplasm. It is found in the nucleoid. Its function is as follows. Involved in control of chromosome replication initiation. Inhibits the cooperative binding of DnaA to the oriC region, thus negatively regulating initiation of chromosome replication. Inhibits the ability of DnaA-ATP to form a helix on DNA; does not disassemble preformed DnaA-DNA helices. Decreases the residence time of DnaA on the chromosome at its binding sites (oriC, replication forks and promoter-binding sites). Tethers DnaA to the replication machinery via the DNA polymerase beta sliding clamp subunit (dnaN). Associates with oriC and other DnaA targets on the chromosome in a DnaA-dependent manner. This is Replication initiation control protein YabA from Staphylococcus aureus (strain bovine RF122 / ET3-1).